The primary structure comprises 326 residues: Target of rapamycin complex subunit LST8 (326 aa).

M1 is subject to N-acetylmethionine. WD repeat units lie at residues 1–37 (MNTTPGTVGSDPVILATAGYDHTVRFWQAHSGICTRT), 40–80 (HQDS…PIIS), 83–122 (GVSKNIASVGFHEDGRWMYTGGEDCTARIWDLRSRNLQCQ), 126–165 (QVNAPINCVCLHPNQAELIVGDQSGTSHIWDLKTDHNEQL), and 168–207 (EPEFSITSAHIDPDASYMAAVNSAGNCFVWNLTGGIGDEV). T51 is subject to Phosphothreonine. K86 participates in a covalent cross-link: Glycyl lysine isopeptide (Lys-Gly) (interchain with G-Cter in SUMO3). Residues K215, K245, and K261 each participate in a glycyl lysine isopeptide (Lys-Gly) (interchain with G-Cter in SUMO3) cross-link. The stretch at 218–257 (AHTRYALQCRFSPDSTLLATCSADQTCKIWRTSNFSLMTE) is one WD 6 repeat. Residues 268–309 (SSRGWMWGCAFSGDSQYIVTASSDNLARLWCVETGEIKREYG) form a WD 7 repeat. K305 is covalently cross-linked (Glycyl lysine isopeptide (Lys-Gly) (interchain with G-Cter in SUMO3); alternate). Glycyl lysine isopeptide (Lys-Gly) (interchain with G-Cter in ubiquitin); alternate cross-links involve residues K305 and K313. A Glycyl lysine isopeptide (Lys-Gly) (interchain with G-Cter in SUMO1); alternate cross-link involves residue K313.

This sequence belongs to the WD repeat LST8 family. As to quaternary structure, part of the mechanistic target of rapamycin complex 1 (mTORC1) which contains MTOR, MLST8 and RPTOR. mTORC1 associates with AKT1S1/PRAS40, which inhibits its activity. mTORC1 binds to and is inhibited by FKBP12-rapamycin. Within mTORC1, interacts directly with MTOR and RPTOR. Component of the mechanistic target of rapamycin complex 2 (mTORC2), consisting in two heterotretramers composed of MTOR, MLST8, RICTOR and MAPKAP1/SIN1. Contrary to mTORC1, mTORC2 does not bind to and is not sensitive to FKBP12-rapamycin. mTORC1 and mTORC2 associate with DEPTOR, which regulates their activity. Interacts with RHEB. Interacts with MEAK7. Interacts with SIK3. Interacts with SLC38A7; this interaction promotes the recruitment of mTORC1 to the lysosome and its subsequent activation. Phosphorylation at Thr-51 by CDK1 promotes ubiquitination by the SCF(FBXW7) complex, followed by degradation. Post-translationally, ubiquitination by the SCF(FBXW7) and SCF(FBXW11) complexes following phosphorylation at Thr-51 by CDK1, leads to its degradation by the proteasome. Ubiquitination at Lys-305 and Lys-313 by TRAF2 via 'Lys-63'-linked polyubiquitin chains inhibits formation of the mTORC2 complex, while promoting formation of the mTORC1 complex: ubiquitination disrupts the interaction between MLST8 and MAPKAP1/SIN1 to favor mTORC1 assembly. Deubiquitination at Lys-305 and Lys-313 by OTUD7B promotes MLST8 interaction with MAPKAP1/SIN1, facilitating mTORC2 assembly. In terms of processing, sumoylation with SUMO1, SUMO2 and SUMO3 promotes assembly of both mTORC1 and mTORC2 complexes. As to expression, expressed at highest levels in the brain and testis, followed by lung, heart, kidney, skeletal muscle, spleen and liver. Also expressed in epididymal, abdominal and brown fat, small intestine and pancreas.

It localises to the lysosome membrane. The protein resides in the cytoplasm. Functionally, subunit of both mTORC1 and mTORC2, which regulates cell growth and survival in response to nutrient and hormonal signals. mTORC1 is activated in response to growth factors or amino acids. In response to nutrients, mTORC1 is recruited to the lysosome membrane and promotes protein, lipid and nucleotide synthesis by phosphorylating several substrates, such as ribosomal protein S6 kinase (RPS6KB1 and RPS6KB2) and EIF4EBP1 (4E-BP1). In the same time, it inhibits catabolic pathways by phosphorylating the autophagy initiation components ULK1 and ATG13, as well as transcription factor TFEB, a master regulators of lysosomal biogenesis and autophagy. The mTORC1 complex is inhibited in response to starvation and amino acid depletion. Within mTORC1, MLST8 interacts directly with MTOR and enhances its kinase activity. In nutrient-poor conditions, stabilizes the MTOR-RPTOR interaction and favors RPTOR-mediated inhibition of MTOR activity. As part of the mTORC2 complex, transduces signals from growth factors to pathways involved in proliferation, cytoskeletal organization, lipogenesis and anabolic output. mTORC2 is also activated by growth factors, but seems to be nutrient-insensitive. In response to growth factors, mTORC2 phosphorylates and activates AGC protein kinase family members, including AKT (AKT1, AKT2 and AKT3), PKC (PRKCA, PRKCB and PRKCE) and SGK1. mTORC2 functions upstream of Rho GTPases to regulate the actin cytoskeleton, probably by activating one or more Rho-type guanine nucleotide exchange factors. mTORC2 promotes the serum-induced formation of stress-fibers or F-actin. mTORC2 plays a critical role in AKT1 activation by mediating phosphorylation of different sites depending on the context, such as 'Thr-450', 'Ser-473', 'Ser-477' or 'Thr-479', facilitating the phosphorylation of the activation loop of AKT1 on 'Thr-308' by PDPK1/PDK1 which is a prerequisite for full activation. mTORC2 regulates the phosphorylation of SGK1 at 'Ser-422'. mTORC2 also modulates the phosphorylation of PRKCA on 'Ser-657'. Within mTORC2, MLST8 acts as a bridge between MAPKAP1/SIN1 and MTOR. This Rattus norvegicus (Rat) protein is Target of rapamycin complex subunit LST8.